Reading from the N-terminus, the 110-residue chain is Prothymosin alpha (110 aa).

Methionine 1 is modified (N-acetylmethionine). Positions 1-110 are disordered; the sequence is MSDAAVDTSS…TKKQKTDEDD (110 aa). Serine 2 carries the post-translational modification N-acetylserine; in Prothymosin alpha, N-terminally processed. Serine 2 carries the post-translational modification Phosphoserine. Threonine 8 is subject to Phosphothreonine; by CK2. A phosphoserine mark is found at serine 9 and serine 10. A phosphothreonine; by CK2 mark is found at threonine 13 and threonine 14. The span at 13–31 shows a compositional bias: basic and acidic residues; it reads TTKDLKEKKEVVEEAENGR. Position 15 is an N6-acetyllysine; alternate (lysine 15). At lysine 15 the chain carries N6-succinyllysine; alternate. A compositionally biased stretch (low complexity) spans 32 to 41; the sequence is EAPANGNANE. The span at 42–83 shows a compositional bias: acidic residues; sequence ENGEQEADNEVDEEEEEGGEEEEEEEEGDGEEEDGDEDEEAE. The segment covering 100-110 has biased composition (basic and acidic residues); it reads DTKKQKTDEDD. Residue threonine 101 is modified to Phosphothreonine. Lysine 102 is subject to N6-acetyllysine; alternate. Lysine 102 is covalently cross-linked (Glycyl lysine isopeptide (Lys-Gly) (interchain with G-Cter in SUMO2); alternate). Threonine 106 is subject to Phosphothreonine.

This sequence belongs to the pro/parathymosin family. As to quaternary structure, interacts with NUPR1; regulates apoptotic process. Post-translationally, covalently linked to a small RNA of about 20 nucleotides.

Its subcellular location is the nucleus. Its function is as follows. Prothymosin alpha may mediate immune function by conferring resistance to certain opportunistic infections. This chain is Prothymosin alpha (PTMA), found in Bos taurus (Bovine).